A 252-amino-acid chain; its full sequence is Hydroxyacylglutathione hydrolase (252 aa).

Positions 54, 56, 58, 59, 111, 130, and 170 each coordinate Zn(2+).

This sequence belongs to the metallo-beta-lactamase superfamily. Glyoxalase II family. In terms of assembly, monomer. The cofactor is Zn(2+).

The catalysed reaction is an S-(2-hydroxyacyl)glutathione + H2O = a 2-hydroxy carboxylate + glutathione + H(+). It functions in the pathway secondary metabolite metabolism; methylglyoxal degradation; (R)-lactate from methylglyoxal: step 2/2. Thiolesterase that catalyzes the hydrolysis of S-D-lactoyl-glutathione to form glutathione and D-lactic acid. This chain is Hydroxyacylglutathione hydrolase, found in Francisella tularensis subsp. novicida (strain U112).